The chain runs to 72 residues: MSKDDVIQMQGEVLENLPNATFRVKLENGHVVLGHISGKMRMHYIRILPGDKVTVELTPYDLTRARIVFRSK.

One can recognise an S1-like domain in the interval M1–K72.

It belongs to the IF-1 family. As to quaternary structure, component of the 30S ribosomal translation pre-initiation complex which assembles on the 30S ribosome in the order IF-2 and IF-3, IF-1 and N-formylmethionyl-tRNA(fMet); mRNA recruitment can occur at any time during PIC assembly.

The protein localises to the cytoplasm. Its function is as follows. One of the essential components for the initiation of protein synthesis. Stabilizes the binding of IF-2 and IF-3 on the 30S subunit to which N-formylmethionyl-tRNA(fMet) subsequently binds. Helps modulate mRNA selection, yielding the 30S pre-initiation complex (PIC). Upon addition of the 50S ribosomal subunit IF-1, IF-2 and IF-3 are released leaving the mature 70S translation initiation complex. This chain is Translation initiation factor IF-1 1, found in Bordetella avium (strain 197N).